The chain runs to 445 residues: KICSTOR subunit 2 (445 aa).

It belongs to the KICS2 family. In terms of assembly, part of the KICSTOR complex composed of KPTN, ITFG2, KICS2 and SZT2. SZT2 probably serves as a link between the other three proteins in the KICSTOR complex and may mediate the direct interaction with the GATOR complex via GATOR1. The KICSTOR complex interacts directly with the GATOR1 complex and most probably indirectly with the GATOR2 complex in an amino acid-independent manner.

The protein resides in the lysosome membrane. As part of the KICSTOR complex functions in the amino acid-sensing branch of the TORC1 signaling pathway. Recruits, in an amino acid-independent manner, the GATOR1 complex to the lysosomal membranes and allows its interaction with GATOR2 and the RAG GTPases. Functions upstream of the RAG GTPases and is required to negatively regulate mTORC1 signaling in absence of amino acids. In absence of the KICSTOR complex mTORC1 is constitutively localized to the lysosome and activated. The KICSTOR complex is also probably involved in the regulation of mTORC1 by glucose. The protein is KICSTOR subunit 2 of Mus musculus (Mouse).